The sequence spans 159 residues: Ribosomal RNA large subunit methyltransferase H (159 aa).

Residues L76, G108, and 127–132 each bind S-adenosyl-L-methionine; that span reads FSKMTL.

It belongs to the RNA methyltransferase RlmH family. As to quaternary structure, homodimer.

It is found in the cytoplasm. The catalysed reaction is pseudouridine(1915) in 23S rRNA + S-adenosyl-L-methionine = N(3)-methylpseudouridine(1915) in 23S rRNA + S-adenosyl-L-homocysteine + H(+). Specifically methylates the pseudouridine at position 1915 (m3Psi1915) in 23S rRNA. This is Ribosomal RNA large subunit methyltransferase H from Bacillus thuringiensis subsp. konkukian (strain 97-27).